A 269-amino-acid polypeptide reads, in one-letter code: 3-methyl-2-oxobutanoate hydroxymethyltransferase (269 aa).

Residues D52 and D91 each coordinate Mg(2+). Residues 52-53 (DT), D91, and K121 each bind 3-methyl-2-oxobutanoate. E123 is a binding site for Mg(2+). The active-site Proton acceptor is the E186.

It belongs to the PanB family. Homodecamer; pentamer of dimers. The cofactor is Mg(2+).

The protein localises to the cytoplasm. It catalyses the reaction 3-methyl-2-oxobutanoate + (6R)-5,10-methylene-5,6,7,8-tetrahydrofolate + H2O = 2-dehydropantoate + (6S)-5,6,7,8-tetrahydrofolate. It participates in cofactor biosynthesis; (R)-pantothenate biosynthesis; (R)-pantoate from 3-methyl-2-oxobutanoate: step 1/2. In terms of biological role, catalyzes the reversible reaction in which hydroxymethyl group from 5,10-methylenetetrahydrofolate is transferred onto alpha-ketoisovalerate to form ketopantoate. The polypeptide is 3-methyl-2-oxobutanoate hydroxymethyltransferase (Rhodopirellula baltica (strain DSM 10527 / NCIMB 13988 / SH1)).